We begin with the raw amino-acid sequence, 508 residues long: Photosystem II CP47 reaction center protein (508 aa).

A run of 6 helical transmembrane segments spans residues 21–36, 101–115, 140–156, 203–218, 237–252, and 457–472; these read AVHLMHTALVAGWAGS, IVLSGLLFLAAVWHW, GIHLFLSGLLCFGFGAF, IAAGVVGIVAGLFHLT, VLSSSLAAVFFAAFVV, and SFALLFFFGHIWHGSR.

This sequence belongs to the PsbB/PsbC family. PsbB subfamily. PSII is composed of 1 copy each of membrane proteins PsbA, PsbB, PsbC, PsbD, PsbE, PsbF, PsbH, PsbI, PsbJ, PsbK, PsbL, PsbM, PsbT, PsbX, PsbY, PsbZ, Psb30/Ycf12, peripheral proteins PsbO, CyanoQ (PsbQ), PsbU, PsbV and a large number of cofactors. It forms dimeric complexes. Binds multiple chlorophylls. PSII binds additional chlorophylls, carotenoids and specific lipids. serves as cofactor.

It localises to the cellular thylakoid membrane. In terms of biological role, one of the components of the core complex of photosystem II (PSII). It binds chlorophyll and helps catalyze the primary light-induced photochemical processes of PSII. PSII is a light-driven water:plastoquinone oxidoreductase, using light energy to abstract electrons from H(2)O, generating O(2) and a proton gradient subsequently used for ATP formation. The polypeptide is Photosystem II CP47 reaction center protein (Synechococcus elongatus (strain ATCC 33912 / PCC 7942 / FACHB-805) (Anacystis nidulans R2)).